The following is a 368-amino-acid chain: GLABROUS1 enhancer-binding protein-like (368 aa).

Residues 1–123 (MAPKKAEEVV…TSDTEHVKKP (123 aa)) form a disordered region. Acidic residues predominate over residues 17 to 31 (SEEEESGSSGEESES). Over residues 35-47 (VPKKVESSQKPES) the composition is skewed to basic and acidic residues. Polar residues predominate over residues 84-97 (TSGSAATVPESSTA). The segment covering 100 to 123 (PLKEAAPEAIKKQKTSDTEHVKKP) has biased composition (basic and acidic residues).

This sequence belongs to the GeBP family. Mono-, di- and oligomers. Associated with the Mediator complex. Interacts with MED6. Interacts with MED10A, MED28 and MED32. Interacts with DEK3.

The protein resides in the nucleus. Its function is as follows. Transcription factor that binds promoters containing the CryR2 element, 5'-ACATAWCT-3'. The DNA-binding activity is decreased upon direct physical interaction with the mediator subunits and is modulated by redox conditions. The oxidized protein is the preferential binding form. This Arabidopsis thaliana (Mouse-ear cress) protein is GLABROUS1 enhancer-binding protein-like.